The primary structure comprises 158 residues: Large ribosomal subunit protein uL15 (158 aa).

Over residues 1–13 the composition is skewed to basic and acidic residues; it reads MKLNEIKDNEGST. The tract at residues 1-45 is disordered; the sequence is MKLNEIKDNEGSTHSRKRLGRGIGSGSGKTGGRGVKGQKSRSGVA. Positions 21–35 are enriched in gly residues; that stretch reads RGIGSGSGKTGGRGV.

It belongs to the universal ribosomal protein uL15 family. In terms of assembly, part of the 50S ribosomal subunit.

Functionally, binds to the 23S rRNA. This chain is Large ribosomal subunit protein uL15, found in Rhizobium johnstonii (strain DSM 114642 / LMG 32736 / 3841) (Rhizobium leguminosarum bv. viciae).